The sequence spans 96 residues: Bacterial microcompartment shell protein EutM (96 aa).

One can recognise a BMC domain in the interval 3–87 (ALGMIETRGL…PHGDLEEVFP (85 aa)).

The protein belongs to the bacterial microcompartments protein family. Homohexamer with a central pore of up to 8.6 Angstroms diameter. The hexamers pack into a two-dimensional array. Interacts with EutQ; a probably cytoplasm-facing helix (Val-49 to Gln-64) interacts with N-terminus of EutQ.

The protein localises to the bacterial microcompartment. The protein operates within amine and polyamine degradation; ethanolamine degradation. Probably a major component of the bacterial microcompartment (BMC) shell dedicated to ethanolamine degradation. Each homohexamer has a central pore with an opening of up to 8.6 Angstroms. A positively-charged funnel leads to the pore from each side of the hexamer. The pore probably allows metabolite passage into and out of the BMC. Expression of eutK, eutL, eutM, eutN, eutS (eutSMNLK) in E.coli leads to formation of a single BMC. Expression alone leads to thick filaments that interfere with cell separation. Coexpression of eutQ with eutSMNLK permits E.coli to make cells with more than one mobile BMC, as is usual in vivo. May play a role in BMC shell biogenesis. Can replace homolog pduA in the pdu operon, cells grow better than wild-type on 1,2-propanediol and vitamin B12. Protein is incorporated into the pdu BMC microcompartment. Its function is as follows. The ethanolamine (EA) catabolic bacterial microcompartment (BMC) probably concentrates low levels of ethanolamine catabolic enzymes, concentrates volatile reaction intermediates, keeps the level of toxic acetaldehyde low, generates enough acetyl-CoA to support cell growth, and maintains a pool of free coenzyme A (CoA) and NAD. Deletion of BMC genes (eutK, eutL, eutM) restores growth of eutD deletions, suggesting there are dedicated pools of coenzyme A (CoA) and NAD in the BMC. Functionally, expression of the eut operon allows this bacteria to use ethanolamine as a carbon, nitrogen and energy source. It relies on cobalamin (vitamin B12) both as a cofactor for the ethanolamine ammonia-lyase (EAL) activity and to induce the operon. EA enhances bacterial survival in macrophages in a concentration-dependent manner, suggesting it is an important nutrient during infection. This is Bacterial microcompartment shell protein EutM from Salmonella typhimurium (strain LT2 / SGSC1412 / ATCC 700720).